The following is a 190-amino-acid chain: Large ribosomal subunit protein bL25 (190 aa).

A disordered region spans residues 1-20; sequence MSEQKTLSVQKRDNLGKGAN.

It belongs to the bacterial ribosomal protein bL25 family. CTC subfamily. In terms of assembly, part of the 50S ribosomal subunit; part of the 5S rRNA/L5/L18/L25 subcomplex. Contacts the 5S rRNA. Binds to the 5S rRNA independently of L5 and L18.

Its function is as follows. This is one of the proteins that binds to the 5S RNA in the ribosome where it forms part of the central protuberance. In Nitratidesulfovibrio vulgaris (strain ATCC 29579 / DSM 644 / CCUG 34227 / NCIMB 8303 / VKM B-1760 / Hildenborough) (Desulfovibrio vulgaris), this protein is Large ribosomal subunit protein bL25.